A 57-amino-acid chain; its full sequence is Large ribosomal subunit protein bL32 (57 aa).

The tract at residues 1 to 25 (MATPSNKNSKSHKRNRRGHIGLNVP) is disordered. Over residues 9–19 (SKSHKRNRRGH) the composition is skewed to basic residues.

The protein belongs to the bacterial ribosomal protein bL32 family.

This Leuconostoc mesenteroides subsp. mesenteroides (strain ATCC 8293 / DSM 20343 / BCRC 11652 / CCM 1803 / JCM 6124 / NCDO 523 / NBRC 100496 / NCIMB 8023 / NCTC 12954 / NRRL B-1118 / 37Y) protein is Large ribosomal subunit protein bL32.